The following is a 476-amino-acid chain: Arginine biosynthesis bifunctional protein ArgJ, mitochondrial (476 aa).

6 residues coordinate substrate: T193, K219, T237, E337, N471, and S476. T237 (nucleophile) is an active-site residue.

It belongs to the ArgJ family. As to quaternary structure, heterodimer of an alpha and a beta chain. In terms of processing, the alpha and beta chains are autoproteolytically processed from a single precursor protein within the mitochondrion.

It localises to the mitochondrion matrix. It catalyses the reaction N(2)-acetyl-L-ornithine + L-glutamate = N-acetyl-L-glutamate + L-ornithine. The catalysed reaction is L-glutamate + acetyl-CoA = N-acetyl-L-glutamate + CoA + H(+). It participates in amino-acid biosynthesis; L-arginine biosynthesis; L-ornithine and N-acetyl-L-glutamate from L-glutamate and N(2)-acetyl-L-ornithine (cyclic): step 1/1. Its pathway is amino-acid biosynthesis; L-arginine biosynthesis; N(2)-acetyl-L-ornithine from L-glutamate: step 1/4. Functionally, catalyzes two activities which are involved in the cyclic version of arginine biosynthesis: the synthesis of acetylglutamate from glutamate and acetyl-CoA, and of ornithine by transacetylation between acetylornithine and glutamate. In Cryptococcus neoformans var. neoformans serotype D (strain JEC21 / ATCC MYA-565) (Filobasidiella neoformans), this protein is Arginine biosynthesis bifunctional protein ArgJ, mitochondrial.